Here is a 179-residue protein sequence, read N- to C-terminus: Large ribosomal subunit protein uL5 (179 aa).

Belongs to the universal ribosomal protein uL5 family. As to quaternary structure, part of the 50S ribosomal subunit; part of the 5S rRNA/L5/L18/L25 subcomplex. Contacts the 5S rRNA and the P site tRNA. Forms a bridge to the 30S subunit in the 70S ribosome.

Its function is as follows. This is one of the proteins that bind and probably mediate the attachment of the 5S RNA into the large ribosomal subunit, where it forms part of the central protuberance. In the 70S ribosome it contacts protein S13 of the 30S subunit (bridge B1b), connecting the 2 subunits; this bridge is implicated in subunit movement. Contacts the P site tRNA; the 5S rRNA and some of its associated proteins might help stabilize positioning of ribosome-bound tRNAs. This is Large ribosomal subunit protein uL5 from Pseudomonas paraeruginosa (strain DSM 24068 / PA7) (Pseudomonas aeruginosa (strain PA7)).